We begin with the raw amino-acid sequence, 100 residues long: Large ribosomal subunit protein bL21 (100 aa).

It belongs to the bacterial ribosomal protein bL21 family. Part of the 50S ribosomal subunit. Contacts protein L20.

In terms of biological role, this protein binds to 23S rRNA in the presence of protein L20. The protein is Large ribosomal subunit protein bL21 of Corynebacterium urealyticum (strain ATCC 43042 / DSM 7109).